Consider the following 523-residue polypeptide: MGARSLTLLYLLCCLVVGLIAGFGEEEERSCDPIRITMCQNLGYNVTKMPNLVGHELQADAELQLTTFTPLIQYGCSSQLQFFLCSVYVPMCTEKINIPIGPCGGMCLSVKRRCEPVLKEFGFAWPESLNCSKFPPQNDHNHMCMEGPGDDEVPAHSKTPVLPGEDCNSFGPNSDQYTWVKRSMNCVLKCGYDSGLYNRLSKEFTDIWMAVWASLCFISTAFTVLTFLIDSSRFCYPERPIIFLSMCYNIYSIAYIVRLTVGRERISCDFEEAAEPVLIQEGLKNTGCAIIFLLMYFFGMASSIWWVILTLTWFLAAGLKWGHEAIEMHSSYFHIAAWAIPAVKTIVILIMRLVDADELTGLCYVGNQNIDALTGFVVAPLFTYLVIGTLFIAAGLVALFKIRSNLQKDGTKTDKLERLMVKIGVFSVLYTVPATCVIACYFYEVSNWNVFRYTADDSNMAVEMLNIFMSLLVGITSGMWIWSAKTLHTWQKCTNRLVNSGKVKRKKRVDGWVKPGKGNETVV.

Positions 1-22 are cleaved as a signal peptide; the sequence is MGARSLTLLYLLCCLVVGLIAG. Topologically, residues 23-198 are extracellular; it reads FGEEEERSCD…KCGYDSGLYN (176 aa). Residues 26-147 enclose the FZ domain; sequence EEERSCDPIR…NDHNHMCMEG (122 aa). 8 disulfide bridges follow: Cys-31–Cys-92, Cys-39–Cys-85, Cys-76–Cys-114, Cys-103–Cys-144, Cys-107–Cys-131, Cys-167–Cys-186, Cys-190–Cys-268, and Cys-288–Cys-363. N-linked (GlcNAc...) asparagine glycosylation occurs at Asn-45. N-linked (GlcNAc...) asparagine glycosylation occurs at Asn-130. A helical membrane pass occupies residues 199–229; sequence RLSKEFTDIWMAVWASLCFISTAFTVLTFLI. Residues 230 to 235 lie on the Cytoplasmic side of the membrane; that stretch reads DSSRFC. The helical transmembrane segment at 236-261 threads the bilayer; that stretch reads YPERPIIFLSMCYNIYSIAYIVRLTV. Over 262-285 the chain is Extracellular; that stretch reads GRERISCDFEEAAEPVLIQEGLKN. The helical transmembrane segment at 286–319 threads the bilayer; sequence TGCAIIFLLMYFFGMASSIWWVILTLTWFLAAGL. The Cytoplasmic segment spans residues 320 to 322; it reads KWG. Residues 323-351 form a helical membrane-spanning segment; it reads HEAIEMHSSYFHIAAWAIPAVKTIVILIM. Residues 352-369 are Extracellular-facing; it reads RLVDADELTGLCYVGNQN. A helical membrane pass occupies residues 370–396; it reads IDALTGFVVAPLFTYLVIGTLFIAAGL. The Cytoplasmic portion of the chain corresponds to 397 to 417; it reads VALFKIRSNLQKDGTKTDKLE. A helical membrane pass occupies residues 418-443; that stretch reads RLMVKIGVFSVLYTVPATCVIACYFY. Residues 444–459 are Extracellular-facing; it reads EVSNWNVFRYTADDSN. The helical transmembrane segment at 460-481 threads the bilayer; it reads MAVEMLNIFMSLLVGITSGMWI. Topologically, residues 482 to 523 are cytoplasmic; sequence WSAKTLHTWQKCTNRLVNSGKVKRKKRVDGWVKPGKGNETVV. The short motif at 485–490 is the Lys-Thr-X-X-X-Trp motif, mediates interaction with the PDZ domain of Dvl family members element; sequence KTLHTW. The PDZ-binding signature appears at 521–523; that stretch reads TVV.

Belongs to the G-protein coupled receptor Fz/Smo family. In terms of assembly, interacts (via FZ domain) with tsku; tsku competes with wnt2b for binding to fzd4, inhibiting Wnt signaling and repressing peripheral eye development.

The protein localises to the cell membrane. Functionally, receptor for Wnt proteins. Most frizzled receptors are coupled to the beta-catenin canonical signaling pathway, which leads to the activation of disheveled proteins, inhibition of GSK-3 kinase, nuclear accumulation of beta-catenin and activation of Wnt target genes. A second signaling pathway involving PKC and calcium fluxes has been seen for some family members, but it is not yet clear if it represents a distinct pathway or if it can be integrated in the canonical pathway, as PKC seems to be required for Wnt-mediated inactivation of GSK-3 kinase. Both pathways seem to involve interactions with G-proteins. May be involved in transduction and intercellular transmission of polarity information during tissue morphogenesis and/or in differentiated tissues. Activated by Wnt5A. The chain is Frizzled-4 (fzd4) from Xenopus laevis (African clawed frog).